We begin with the raw amino-acid sequence, 185 residues long: Ribosome-recycling factor (185 aa).

Belongs to the RRF family.

It localises to the cytoplasm. Responsible for the release of ribosomes from messenger RNA at the termination of protein biosynthesis. May increase the efficiency of translation by recycling ribosomes from one round of translation to another. This Neisseria meningitidis serogroup A / serotype 4A (strain DSM 15465 / Z2491) protein is Ribosome-recycling factor.